The sequence spans 329 residues: Protein RecA (329 aa).

Position 63-70 (63-70 (GNESSGKT)) interacts with ATP.

The protein belongs to the RecA family.

The protein localises to the cytoplasm. Its function is as follows. Can catalyze the hydrolysis of ATP in the presence of single-stranded DNA, the ATP-dependent uptake of single-stranded DNA by duplex DNA, and the ATP-dependent hybridization of homologous single-stranded DNAs. It interacts with LexA causing its activation and leading to its autocatalytic cleavage. The sequence is that of Protein RecA from Malacoplasma penetrans (strain HF-2) (Mycoplasma penetrans).